The sequence spans 205 residues: MKMQSNITKIIIIMSLLIGVGALYVLLSLSTPKKPLAGQFNIYEDKIKIGGPFELIDQNGEIFNSDKLRGHLSLIYFGFTSCPDICPTSLNKITNIVEILHQNKIDIIPVFITVDPKRDTPEVLKEYIKNFHPKFISLTGNEHQIKDVTDKFKVFYARVNSDNDDQNYMIDHSSFTYLIDKNGRYMKHFYLDISAKEIMELFKNE.

Cu cation-binding residues include C82, C86, and H172.

This sequence belongs to the SCO1/2 family.

This is SCO2-like protein RP587 from Rickettsia prowazekii (strain Madrid E).